The following is a 710-amino-acid chain: Polyribonucleotide nucleotidyltransferase (710 aa).

Mg(2+)-binding residues include Asp485 and Asp491. In terms of domain architecture, KH spans 552–611 (PKILTLTINPDKIRDVIGPSGKVINKIIEETGVKIDIEQDGTVYISSLDTAMNQKAKQII). One can recognise an S1 motif domain in the interval 621–689 (GETYHGKVKR…NQGRVNLSRK (69 aa)).

This sequence belongs to the polyribonucleotide nucleotidyltransferase family. Mg(2+) serves as cofactor.

It is found in the cytoplasm. It carries out the reaction RNA(n+1) + phosphate = RNA(n) + a ribonucleoside 5'-diphosphate. Involved in mRNA degradation. Catalyzes the phosphorolysis of single-stranded polyribonucleotides processively in the 3'- to 5'-direction. The sequence is that of Polyribonucleotide nucleotidyltransferase from Shouchella clausii (strain KSM-K16) (Alkalihalobacillus clausii).